Here is a 68-residue protein sequence, read N- to C-terminus: MMKKGIHPEYIPCKVTCVTSGKQLEVLSTKSELRIDISSFCHPFYTGSDKITDITGRVEKFRQKYNMK.

This sequence belongs to the bacterial ribosomal protein bL31 family. Type A subfamily. As to quaternary structure, part of the 50S ribosomal subunit.

In terms of biological role, binds the 23S rRNA. This chain is Large ribosomal subunit protein bL31, found in Helicobacter hepaticus (strain ATCC 51449 / 3B1).